Reading from the N-terminus, the 516-residue chain is Cytochrome P450 monooxygenase otaC (516 aa).

A helical membrane pass occupies residues 13 to 30; the sequence is FLWTAFAVGVVYCCTRMV. Cysteine 454 provides a ligand contact to heme.

This sequence belongs to the cytochrome P450 family. Requires heme as cofactor.

The protein localises to the membrane. The enzyme catalyses 7-methylmellein + 3 reduced [NADPH--hemoprotein reductase] + 3 O2 = 7-carboxymellein + 3 oxidized [NADPH--hemoprotein reductase] + 4 H2O + 4 H(+). Its pathway is mycotoxin biosynthesis. In terms of biological role, cytochrome P450 monooxygenase; part of the gene cluster that mediates the biosynthesis of ochratoxin A (OTA), a mycotoxin composed of a chlorinated type I polyketide dihydroisocoumarin moiety linked to L-phenylalanine, and demonstrated to have nephrotoxic, immunotoxic, genotoxic, neurotoxic, and teratogenic properties. OtaC catalyzes the oxidation of 7-methylmellein (7-MM) into 7-carboxymellein. The pathway begins with the highly reducing polyketide synthase otaA that catalyzes the formation of the isocoumarin group during the initial stages of biosynthesis, starting from one acetate and 4 malonate units, to originate the characteristic pentaketide skeleton 7-methylmellein (7-MM) of the OTA molecule. The newly identified cyclase otaY might be involved in the polyketide cyclization reaction during the initial steps of the OTA biosynthesis. 7-MM is then oxidized into 7-carboxymellein (also called ochratoxin beta) by the cytochrome P450 monooxygenase otaC. The NRPS encoded by the otaB gene is involved in the linking of phenylalanine to the dihydroisocoumarin ring. The reaction catalyzed by NRPS results in the production of ochratoxin B (OTB), which is the non-chlorinated analog of OTA and which subsequently serves as the substrate of the halogenase otaD for chlorination activity to form the final molecular structure of OTA, containing a chlorine atom in the C-5 position of the molecule. The chain is Cytochrome P450 monooxygenase otaC from Aspergillus carbonarius (strain ITEM 5010).